Here is a 402-residue protein sequence, read N- to C-terminus: MAKRSLASLNAGDLSGKRVLVRVDFNVPLNDAGAITDDTRIRAALPTINDLIGKGAKVILSAHFGRPKGQVNDAMRLTPVAARLSELLGKPVAKTDSCIGPDAEAKVGAMADGDVVLLENVRFFAEEEKNEAGFAEKLAGLAEVYVNDAFGAAHRAHASTEGVTKFLKPAVAGFLMEKELQYLQGAVDEPKRPLAAIVGGSKVSSKIGVLEALIDKCDKVLIGGGMIFTFYKARGLSVGKSLVEEDKLELAKELEAKAKAKGVELLLPTDVVLADNFAPDANSQVADVTAIPDGWMGLDIGPDAVKVFQAALADCQTVIWNGPMGVFEFEKFATGTNAIATTLAELSAKGCCTIIGGGDSVAAVEKAGLAEKMSHISTGGGASLELLEGKVLPGVAALNDAA.

Residues 24-26 (DFN), arginine 40, 63-66 (HFGR), arginine 122, and arginine 155 contribute to the substrate site. ATP-binding positions include lysine 206, glycine 297, glutamate 328, and 357–360 (GGDS).

This sequence belongs to the phosphoglycerate kinase family. In terms of assembly, monomer.

Its subcellular location is the cytoplasm. The enzyme catalyses (2R)-3-phosphoglycerate + ATP = (2R)-3-phospho-glyceroyl phosphate + ADP. The protein operates within carbohydrate degradation; glycolysis; pyruvate from D-glyceraldehyde 3-phosphate: step 2/5. This chain is Phosphoglycerate kinase, found in Synechococcus sp. (strain WH7803).